The chain runs to 37 residues: Large ribosomal subunit protein bL36 (37 aa).

It belongs to the bacterial ribosomal protein bL36 family.

This is Large ribosomal subunit protein bL36 from Staphylococcus carnosus (strain TM300).